The sequence spans 417 residues: 4-hydroxy-3-methylbut-2-enyl diphosphate reductase (417 aa).

Residue Cys-56 coordinates [4Fe-4S] cluster. His-86 contacts (2E)-4-hydroxy-3-methylbut-2-enyl diphosphate. His-86 provides a ligand contact to dimethylallyl diphosphate. His-86 lines the isopentenyl diphosphate pocket. Cys-151 is a binding site for [4Fe-4S] cluster. His-179 contributes to the (2E)-4-hydroxy-3-methylbut-2-enyl diphosphate binding site. His-179 lines the dimethylallyl diphosphate pocket. Isopentenyl diphosphate is bound at residue His-179. Glu-181 (proton donor) is an active-site residue. Thr-244 is a (2E)-4-hydroxy-3-methylbut-2-enyl diphosphate binding site. Cys-282 is a [4Fe-4S] cluster binding site. Positions 311, 312, 313, and 374 each coordinate (2E)-4-hydroxy-3-methylbut-2-enyl diphosphate. Ser-311, Ser-312, Asn-313, and Ser-374 together coordinate dimethylallyl diphosphate. The isopentenyl diphosphate site is built by Ser-311, Ser-312, Asn-313, and Ser-374.

This sequence belongs to the IspH family. The cofactor is [4Fe-4S] cluster.

The catalysed reaction is isopentenyl diphosphate + 2 oxidized [2Fe-2S]-[ferredoxin] + H2O = (2E)-4-hydroxy-3-methylbut-2-enyl diphosphate + 2 reduced [2Fe-2S]-[ferredoxin] + 2 H(+). It catalyses the reaction dimethylallyl diphosphate + 2 oxidized [2Fe-2S]-[ferredoxin] + H2O = (2E)-4-hydroxy-3-methylbut-2-enyl diphosphate + 2 reduced [2Fe-2S]-[ferredoxin] + 2 H(+). The protein operates within isoprenoid biosynthesis; dimethylallyl diphosphate biosynthesis; dimethylallyl diphosphate from (2E)-4-hydroxy-3-methylbutenyl diphosphate: step 1/1. Its pathway is isoprenoid biosynthesis; isopentenyl diphosphate biosynthesis via DXP pathway; isopentenyl diphosphate from 1-deoxy-D-xylulose 5-phosphate: step 6/6. Its function is as follows. Catalyzes the conversion of 1-hydroxy-2-methyl-2-(E)-butenyl 4-diphosphate (HMBPP) into a mixture of isopentenyl diphosphate (IPP) and dimethylallyl diphosphate (DMAPP). Acts in the terminal step of the DOXP/MEP pathway for isoprenoid precursor biosynthesis. This is 4-hydroxy-3-methylbut-2-enyl diphosphate reductase from Gloeobacter violaceus (strain ATCC 29082 / PCC 7421).